The primary structure comprises 158 residues: NAD(P)H-quinone oxidoreductase subunit J, chloroplastic (158 aa).

This sequence belongs to the complex I 30 kDa subunit family. In terms of assembly, NDH is composed of at least 16 different subunits, 5 of which are encoded in the nucleus.

It localises to the plastid. The protein localises to the chloroplast thylakoid membrane. The catalysed reaction is a plastoquinone + NADH + (n+1) H(+)(in) = a plastoquinol + NAD(+) + n H(+)(out). It catalyses the reaction a plastoquinone + NADPH + (n+1) H(+)(in) = a plastoquinol + NADP(+) + n H(+)(out). NDH shuttles electrons from NAD(P)H:plastoquinone, via FMN and iron-sulfur (Fe-S) centers, to quinones in the photosynthetic chain and possibly in a chloroplast respiratory chain. The immediate electron acceptor for the enzyme in this species is believed to be plastoquinone. Couples the redox reaction to proton translocation, and thus conserves the redox energy in a proton gradient. The protein is NAD(P)H-quinone oxidoreductase subunit J, chloroplastic of Crucihimalaya wallichii (Rock-cress).